The chain runs to 167 residues: Small ribosomal subunit protein uS5 (167 aa).

Positions 11-74 (LQEKLIAVNR…EKARRAMINV (64 aa)) constitute an S5 DRBM domain.

Belongs to the universal ribosomal protein uS5 family. Part of the 30S ribosomal subunit. Contacts proteins S4 and S8.

Its function is as follows. With S4 and S12 plays an important role in translational accuracy. In terms of biological role, located at the back of the 30S subunit body where it stabilizes the conformation of the head with respect to the body. This chain is Small ribosomal subunit protein uS5, found in Yersinia enterocolitica serotype O:8 / biotype 1B (strain NCTC 13174 / 8081).